The following is a 366-amino-acid chain: Reticulon-4-interacting protein 1, mitochondrial (366 aa).

A mitochondrion-targeting transit peptide spans M1 to A20.

The protein belongs to the zinc-containing alcohol dehydrogenase family. Quinone oxidoreductase subfamily. As to expression, expressed in pharynx, muscles and intestine.

The protein resides in the mitochondrion. Plays a role in oxygen metabolism in the mitochondria by regulating the levels of reactive oxygen species (ROS) thereby conferring resistance to oxidative stress. Involved in resistance to P.aeruginosa PA14 infection. Regulates lifespan. The protein is Reticulon-4-interacting protein 1, mitochondrial of Caenorhabditis elegans.